The following is a 624-amino-acid chain: Bifunctional protein ArgH (624 aa).

The argininosuccinate lyase stretch occupies residues 1-466 (MALWGGRFTQ…AARDTTLVKV (466 aa)). The N-acetyltransferase domain occupies 464-614 (VKVRPARITD…DEVALEFNLS (151 aa)). The segment at 467–624 (RPARITDIET…EQIISQVKVA (158 aa)) is probable acetyltransferase.

It in the N-terminal section; belongs to the lyase 1 family. Argininosuccinate lyase subfamily.

The protein resides in the cytoplasm. It catalyses the reaction 2-(N(omega)-L-arginino)succinate = fumarate + L-arginine. It participates in amino-acid biosynthesis; L-arginine biosynthesis; L-arginine from L-ornithine and carbamoyl phosphate: step 3/3. The protein is Bifunctional protein ArgH (argH) of Vibrio vulnificus (strain CMCP6).